A 116-amino-acid polypeptide reads, in one-letter code: Large ribosomal subunit protein bL17 (116 aa).

This sequence belongs to the bacterial ribosomal protein bL17 family. Part of the 50S ribosomal subunit. Contacts protein L32.

In Prochlorococcus marinus (strain MIT 9312), this protein is Large ribosomal subunit protein bL17.